The primary structure comprises 156 residues: Ribosomal RNA large subunit methyltransferase H (156 aa).

S-adenosyl-L-methionine contacts are provided by residues L73, G104, and 123–128 (LSALTM).

Belongs to the RNA methyltransferase RlmH family. In terms of assembly, homodimer.

The protein localises to the cytoplasm. The catalysed reaction is pseudouridine(1915) in 23S rRNA + S-adenosyl-L-methionine = N(3)-methylpseudouridine(1915) in 23S rRNA + S-adenosyl-L-homocysteine + H(+). In terms of biological role, specifically methylates the pseudouridine at position 1915 (m3Psi1915) in 23S rRNA. The polypeptide is Ribosomal RNA large subunit methyltransferase H (Tolumonas auensis (strain DSM 9187 / NBRC 110442 / TA 4)).